An 833-amino-acid polypeptide reads, in one-letter code: Copper-exporting P-type ATPase (833 aa).

2 HMA domains span residues 3 to 64 (QTID…YGAT) and 98 to 161 (ESQQ…YGAE). Residues cysteine 14, cysteine 17, cysteine 109, and cysteine 112 each contribute to the Cu(+) site. Helical transmembrane passes span 186 to 206 (WQAIVALAVGIPVMVWGMIGD), 217 to 237 (LWLAIGLITLAVMVFAGGHFY), 253 to 273 (TLVALGTGVAWLYSMSVNLWP), 283 to 303 (LYYEASAMIIGLINLGHMLEA), 437 to 457 (AVFVPVVVAIALFSAAIWYFF), and 463 to 483 (IVYTLVIATTVLIIACPCALG). Catalysis depends on aspartate 522, which acts as the 4-aspartylphosphate intermediate. Aspartate 719 and aspartate 723 together coordinate Mg(2+). 2 consecutive transmembrane segments (helical) span residues 778–798 (LGAFIYNSIGIPVAAGILWPF) and 800–820 (GTLLNPVVAGAAMALSSITVV).

The protein belongs to the cation transport ATPase (P-type) (TC 3.A.3) family. Type IB subfamily.

Its subcellular location is the cell inner membrane. The protein resides in the cytoplasm. The enzyme catalyses Cu(+)(in) + ATP + H2O = Cu(+)(out) + ADP + phosphate + H(+). Its function is as follows. Involved in Cu(+) export. Essential for copper tolerance under both aerobic and anaerobic conditions. In terms of biological role, probably also encodes a cytoplasmic copper chaperone CopA(Z) that is produced by programmed ribosomal frameshifting. In Salmonella typhimurium (strain LT2 / SGSC1412 / ATCC 700720), this protein is Copper-exporting P-type ATPase (copA).